We begin with the raw amino-acid sequence, 78 residues long: Small ribosomal subunit protein eS21 (78 aa).

This sequence belongs to the eukaryotic ribosomal protein eS21 family.

This is Small ribosomal subunit protein eS21 (rps21) from Dictyostelium discoideum (Social amoeba).